A 141-amino-acid polypeptide reads, in one-letter code: Anthrone oxygenase ptaC (141 aa).

Residues methionine 1–proline 19 form the signal peptide. The next 2 membrane-spanning stretches (helical) occupy residues glycine 33–isoleucine 53 and isoleucine 64–alanine 84.

It belongs to the anthrone oxygenase family.

Its subcellular location is the membrane. Its pathway is secondary metabolite biosynthesis. Functionally, anthrone oxygenase; part of the gene cluster that mediates the biosynthesis of pestheic acid, a diphenyl ether which is a biosynthetic precursor of the unique chloropupukeananes. The biosynthesis initiates from condensation of acetate and malonate units catalyzed by the non-reducing PKS ptaA. As the ptaA protein is TE/CLC domain-deficient, hydrolysis and Claisen cyclization of the polyketide could be catalyzed by ptaB containing a beta-lactamase domain. The ptaB protein might hydrolyze the thioester bond between the ACP of ptaA and the intermediate to release atrochrysone carboxylic acid, which is spontaneously dehydrated to form endocrocin anthrone. Endocrocin anthrone is then converted to endocrocin, catalyzed by the anthrone oxygenase ptaC. Spontaneous decarboxylation of endocrocin occurs to generate emodin. An O-methyltransferase (ptaH or ptaI) could methylate emodin to form physcion. PtaJ could then catalyze the oxidative cleavage of physcion, and rotation of the intermediate could then afford desmethylisosulochrin. PtaF, a putative NADH-dependent oxidoreductase, might also participate in the oxidative cleavage step. Desmethylisosulochrin is then transformed by another O-methyltransferase (ptaH or ptaI) to form isosulochrin. Chlorination of isosulochrin by ptaM in the cyclohexadienone B ring then produces chloroisosulochrin. PtaE is responsible for the oxidative coupling reactions of both benzophenones isosulochrin and chloroisosulochrin to RES-1214-1 and pestheic acid respectively, regardless of chlorination. This chain is Anthrone oxygenase ptaC, found in Pestalotiopsis fici (strain W106-1 / CGMCC3.15140).